The primary structure comprises 86 residues: Putative regulatory protein OB1501 (86 aa).

The protein belongs to the RemA family.

The chain is Putative regulatory protein OB1501 from Oceanobacillus iheyensis (strain DSM 14371 / CIP 107618 / JCM 11309 / KCTC 3954 / HTE831).